The following is a 1889-amino-acid chain: Protein TIC 214 (1889 aa).

6 helical membrane passes run 11-31 (LISL…YYGF), 67-87 (FIAG…HLAL), 88-108 (GKPH…FFWN), 127-147 (LSIQ…HFIL), 175-195 (VGWL…LVWI), and 224-244 (IFSI…PSPI). Acidic residues predominate over residues 255 to 265 (PEEVGESEEER). 2 disordered regions span residues 255–303 (PEEV…PSKE) and 1610–1633 (SNQE…KKKQ). The segment covering 279–293 (NQKQGTEENTSSSLF) has biased composition (polar residues).

This sequence belongs to the TIC214 family. As to quaternary structure, part of the Tic complex.

It is found in the plastid. Its subcellular location is the chloroplast inner membrane. Functionally, involved in protein precursor import into chloroplasts. May be part of an intermediate translocation complex acting as a protein-conducting channel at the inner envelope. This Gossypium barbadense (Sea Island cotton) protein is Protein TIC 214.